A 327-amino-acid polypeptide reads, in one-letter code: Immediate early response gene 5 protein (327 aa).

Disordered regions lie at residues 59–166 (GPAG…GVFP) and 227–313 (GPAG…DKPV). The segment covering 71–84 (QPGEPAAGPPAGWG) has biased composition (low complexity). The segment covering 253 to 262 (GEDDDAEEME) has biased composition (acidic residues). Residues 265–278 (NVANLISIFGSSFS) show a composition bias toward polar residues.

This sequence belongs to the IER family. As to quaternary structure, monomer. Homodimer. Associates with the catalytic subunit of protein phosphatase PP2A. Interacts (via N- and C-terminal regions) with PPP2R2B. Interacts with PPP2R2A, PPP2R2C and PPP2R2D. Interacts (via N-terminus) with RPS6KB1. Interacts (via central region) with HSF1; this interaction promotes PPP2CA-induced HSF1 dephosphorylation, leading to enhanced HSF1 transcriptional activity. As to expression, expressed in acute myeloid leukemia (AML) cells.

The protein localises to the nucleus. It localises to the cytoplasm. Plays a role as a transcription factor. Mediates positive transcriptional regulation of several chaperone genes during the heat shock response in a HSF1-dependent manner. Mediates negative transcriptional regulation of CDC25B expression. Plays a role in the dephosphorylation of the heat shock factor HSF1 and ribosomal protein S6 kinase (S6K) by the protein phosphatase PP2A. Involved in the regulation of cell proliferation and resistance to thermal stress. Involved in the cell cycle checkpoint and survival in response to ionizing radiation. Associates with chromatin to the CDC25B promoter. In Homo sapiens (Human), this protein is Immediate early response gene 5 protein (IER5).